Reading from the N-terminus, the 213-residue chain is Phosphoribosyl-dephospho-CoA transferase (213 aa).

Active-site residues include aspartate 135 and aspartate 137.

The protein belongs to the MdcG family.

The catalysed reaction is apo-[malonate decarboxylase ACP] + 2'-(5''-triphospho-alpha-D-ribosyl)-3'-dephospho-CoA = holo-[malonate decarboxylase ACP] + diphosphate. Functionally, transfers 2'-(5-triphosphoribosyl)-3'-dephosphocoenzyme-A to the apo-[acyl-carrier-protein] of the malonate decarboxylase to yield holo-[acyl-carrier-protein]. In Xanthomonas campestris pv. campestris (strain ATCC 33913 / DSM 3586 / NCPPB 528 / LMG 568 / P 25), this protein is Phosphoribosyl-dephospho-CoA transferase.